The following is a 359-amino-acid chain: Prostaglandin F2-alpha receptor (359 aa).

At 1–31 (MSMNNSKQLVSPAAALLSNTTCQTENRLSVF) the chain is on the extracellular side. N-linked (GlcNAc...) asparagine glycans are attached at residues N4 and N19. The chain crosses the membrane as a helical span at residues 32-54 (FSVIFMTVGILSNSLAIAILMKA). Residues 55-69 (YQRFRQKSKASFLLL) lie on the Cytoplasmic side of the membrane. The helical transmembrane segment at 70–90 (ASGLVITDFFGHLINGAIAVF) threads the bilayer. The Extracellular portion of the chain corresponds to 91-109 (VYASDKEWIRFDQSNVLCS). C108 and C186 form a disulfide bridge. Residues 110–131 (IFGICMVFSGLCPLLLGSVMAI) traverse the membrane as a helical segment. Residues 132-152 (ERCIGVTKPIFHSTKITSKHV) lie on the Cytoplasmic side of the membrane. Residues 153–175 (KMMLSGVCLFAVFIALLPILGHR) traverse the membrane as a helical segment. The Extracellular segment spans residues 176 to 198 (DYKIQASRTWCFYNTEDIKDWED). Residues 199 to 224 (RFYLLLFSFLGLLALGVSLLCNAITG) form a helical membrane-spanning segment. The Cytoplasmic segment spans residues 225 to 250 (ITLLRVKFKSQQHRQGRSHHLEMVIQ). Residues 251 to 267 (LLAIMCVSCICWSPFLV) form a helical membrane-spanning segment. Over 268–285 (TMANIGINGNHSLETCET) the chain is Extracellular. Residues 286-307 (TLFALRMATWNQILDPWVYILL) traverse the membrane as a helical segment. Residues 308–359 (RKAVLKNLYKLASQCCGVHVISLHIWELSSIKNSLKVAAISESPVAEKSAST) are Cytoplasmic-facing.

It belongs to the G-protein coupled receptor 1 family. Isoform 1 can form heterodimers with isoform 5 (and probably other isoforms). Eye.

The protein resides in the cell membrane. Receptor for prostaglandin F2-alpha (PGF2-alpha). The activity of this receptor is mediated by G proteins which activate a phosphatidylinositol-calcium second messenger system. Initiates luteolysis in the corpus luteum. Isoforms 2 to 7 do not bind PGF2-alpha but are proposed to modulate signaling by participating in variant receptor complexes; heterodimers between isoform 1 and isoform 5 are proposed to be a receptor for prostamides including the synthetic analog bimatoprost. This Homo sapiens (Human) protein is Prostaglandin F2-alpha receptor (PTGFR).